Reading from the N-terminus, the 293-residue chain is F-box only protein 6 (293 aa).

The 48-residue stretch at Leu10–Lys57 folds into the F-box domain. Residues Phe78–Pro259 form the FBA domain. The residue at position 258 (Ser258) is a Phosphoserine. The span at Met261–Gln271 shows a compositional bias: polar residues. The interval Met261 to Pro285 is disordered. Ser284 is subject to Phosphoserine.

In terms of assembly, interacts with VCP. Part of a SCF (SKP1-cullin-F-box) protein ligase complex. Interacts with CHEK1 and CUL1.

Its subcellular location is the cytoplasm. Its pathway is protein modification; protein ubiquitination. Its function is as follows. Substrate-recognition component of some SCF (SKP1-CUL1-F-box protein)-type E3 ubiquitin ligase complexes. Involved in endoplasmic reticulum-associated degradation pathway (ERAD) for misfolded lumenal proteins by recognizing and binding sugar chains on unfolded glycoproteins that are retrotranslocated into the cytosol and promoting their ubiquitination and subsequent degradation. Able to recognize and bind denatured glycoproteins, which are modified with not only high-mannose but also complex-type oligosaccharides. Also recognizes sulfated glycans. Also involved in DNA damage response by specifically recognizing activated CHEK1 (phosphorylated on 'Ser-345'), promoting its ubiquitination and degradation. Ubiquitination of CHEK1 is required to ensure that activated CHEK1 does not accumulate as cells progress through S phase, or when replication forks encounter transient impediments during normal DNA replication. This Homo sapiens (Human) protein is F-box only protein 6 (FBXO6).